The following is a 237-amino-acid chain: Phosphoribosylaminoimidazole-succinocarboxamide synthase (237 aa).

The protein belongs to the SAICAR synthetase family.

The enzyme catalyses 5-amino-1-(5-phospho-D-ribosyl)imidazole-4-carboxylate + L-aspartate + ATP = (2S)-2-[5-amino-1-(5-phospho-beta-D-ribosyl)imidazole-4-carboxamido]succinate + ADP + phosphate + 2 H(+). Its pathway is purine metabolism; IMP biosynthesis via de novo pathway; 5-amino-1-(5-phospho-D-ribosyl)imidazole-4-carboxamide from 5-amino-1-(5-phospho-D-ribosyl)imidazole-4-carboxylate: step 1/2. This Shigella boydii serotype 4 (strain Sb227) protein is Phosphoribosylaminoimidazole-succinocarboxamide synthase.